Reading from the N-terminus, the 209-residue chain is uncharacterized protein (209 aa).

This is an uncharacterized protein from Sulfolobus islandicus rod-shaped virus 1 (SIRV-1).